A 481-amino-acid chain; its full sequence is RAC-alpha serine/threonine-protein kinase (481 aa).

The 104-residue stretch at 5–108 (AIVKEGWLHK…WIQVIQHVAD (104 aa)) folds into the PH domain. Residues 120–141 (VRSGDSPSDNSGAEEMEVSHSK) are disordered. 2 O-linked (GlcNAc) serine glycosylation sites follow: S127 and S130. Residues 151–409 (FEYLKLLGKG…AKEIMQHKFF (259 aa)) enclose the Protein kinase domain. Residues 157–165 (LGKGTFGKV) and K180 each bind ATP. D275 (proton acceptor) is an active-site residue. Residue T306 is glycosylated (O-linked (GlcNAc) threonine). The residue at position 309 (T309) is a Phosphothreonine; by PDPK1. A glycan (O-linked (GlcNAc) threonine) is linked at T313. The AGC-kinase C-terminal domain occupies 410 to 481 (AGIVWQDVYE…QFSYSASGNA (72 aa)). Phosphoserine is present on S474. Residue S474 is glycosylated (O-linked (GlcNAc) serine; alternate). Phosphotyrosine is present on Y475.

It belongs to the protein kinase superfamily. AGC Ser/Thr protein kinase family. RAC subfamily. In terms of processing, cleavage by caspase-3/CASP3. Cleaved at the caspase-3 consensus site Asp-463 during apoptosis, resulting in down-regulation of the AKT signaling pathway and decreased cell survival. Phosphorylation on Thr-309 and Ser-474 is required for full activity. Phosphorylation of the activation loop at Thr-309 by PDPK1/PDK1 is a prerequisite for full activation. Phosphorylation by mTORC2 at Ser-474 in response to growth factors plays a key role in AKT1 activation by facilitating subsequent phosphorylation of the activation loop by PDPK1/PDK1. Expressed in the oocyte.

The protein resides in the cytoplasm. It is found in the nucleus. It catalyses the reaction L-seryl-[protein] + ATP = O-phospho-L-seryl-[protein] + ADP + H(+). The enzyme catalyses L-threonyl-[protein] + ATP = O-phospho-L-threonyl-[protein] + ADP + H(+). Its activity is regulated as follows. Activated in response to insulin. Three specific sites, one in the kinase domain (Thr-309) and the two other ones in the C-terminal regulatory region (Ser-474 and Tyr-475), need to be phosphorylated for its full activation. Its function is as follows. AKT1 is one of several closely related serine/threonine-protein kinases known as the AKT kinase, and which regulate many processes including metabolism, proliferation, cell survival, growth and angiogenesis. This is mediated through serine and/or threonine phosphorylation of a range of downstream substrates. Over 100 substrate candidates have been reported so far, but for most of them, no isoform specificity has been reported. Signals downstream of phosphatidylinositol 3-kinase (PI(3)K) to mediate the effects of various growth factors such as platelet-derived growth factor (PDGF), epidermal growth factor (EGF), insulin and insulin-like growth factor 1 (IGF1). Plays a role as a key modulator of the AKT-mTOR signaling pathway controlling the tempo of the process of newborn neurons integration during adult neurogenesis, including correct neuron positioning, dendritic development and synapse formation. Plays a role in glucose transport by mediating insulin-induced translocation of the GLUT4 glucose transporter to the cell surface. Mediates the antiapoptotic effects of IGF1. Mediates insulin-stimulated protein synthesis, partly by playing a role in both insulin-induced phosphorylation of 4E-BP1 and in insulin-induced activation of p70 S6 kinase. Promotes glycogen synthesis by mediating the insulin-induced activation of glycogen synthase. Required for insulin-stimulated meiotic reinitiation during oocyte maturation. May be involved in the regulation of vesicular functions such as preciliary trafficking and endocytic recycling. This chain is RAC-alpha serine/threonine-protein kinase, found in Xenopus laevis (African clawed frog).